Reading from the N-terminus, the 231-residue chain is MLLTPTELERLTLYTAAELSRKRRGKGLRLNFPEASALIADEILEGAREGRSVAELIGFGSTILNTDDVMPGVADLLPVLQVEGTFPDGTKLVTVHQPIRPGKLPLAVMPTPGEILSPNSDIQLNNGRPIATLRAINTGDRPVQIGSHYHFFEVNKALDFPRETAFGMHLDIPAGTAVRFEPGELREVQLVQFGGTGDIHGFSGLTNGNLHDPACKRAALERARAQHFKGA.

The segment at 1–101 is urease gamma; sequence MLLTPTELER…LVTVHQPIRP (101 aa). A urease beta region spans residues 102–231; sequence GKLPLAVMPT…RARAQHFKGA (130 aa).

The protein in the N-terminal section; belongs to the urease gamma subunit family. In the C-terminal section; belongs to the urease beta subunit family. As to quaternary structure, heterohexamer of 3 UreC (alpha) and 3 UreAB (gamma/beta) subunits.

It is found in the cytoplasm. It carries out the reaction urea + 2 H2O + H(+) = hydrogencarbonate + 2 NH4(+). The protein operates within nitrogen metabolism; urea degradation; CO(2) and NH(3) from urea (urease route): step 1/1. The polypeptide is Urease subunit gamma/beta (Pseudomonas syringae pv. tomato (strain ATCC BAA-871 / DC3000)).